Here is a 172-residue protein sequence, read N- to C-terminus: Large ribosomal subunit protein uL10 (172 aa).

Belongs to the universal ribosomal protein uL10 family. In terms of assembly, part of the ribosomal stalk of the 50S ribosomal subunit. The N-terminus interacts with L11 and the large rRNA to form the base of the stalk. The C-terminus forms an elongated spine to which L12 dimers bind in a sequential fashion forming a multimeric L10(L12)X complex.

Forms part of the ribosomal stalk, playing a central role in the interaction of the ribosome with GTP-bound translation factors. The sequence is that of Large ribosomal subunit protein uL10 from Nitrobacter hamburgensis (strain DSM 10229 / NCIMB 13809 / X14).